Here is a 290-residue protein sequence, read N- to C-terminus: Syntaxin (290 aa).

The segment at Met1–Val22 is disordered. Over Met1–Lys267 the chain is Cytoplasmic. A coiled-coil region spans residues Met32–Asp114. Residues Leu194 to Ala256 form the t-SNARE coiled-coil homology domain. A helical; Anchor for type IV membrane protein membrane pass occupies residues Ile268–Thr288. Topologically, residues Leu289–Gly290 are extracellular.

This sequence belongs to the syntaxin family.

Its subcellular location is the membrane. Functionally, potentially involved in docking of synaptic vesicles at presynaptic active zones. The protein is Syntaxin of Aplysia californica (California sea hare).